The sequence spans 243 residues: Uridine-cytidine kinase B (243 aa).

Residue 22–29 (GGTASGKT) coordinates ATP.

Belongs to the uridine kinase family.

The catalysed reaction is uridine + ATP = UMP + ADP + H(+). It carries out the reaction cytidine + ATP = CMP + ADP + H(+). The protein operates within pyrimidine metabolism; CTP biosynthesis via salvage pathway; CTP from cytidine: step 1/3. It participates in pyrimidine metabolism; UMP biosynthesis via salvage pathway; UMP from uridine: step 1/1. In terms of biological role, catalyzes the conversion of uridine into uridine monophosphate and cytidine into cytidine monophosphate in the pyrimidine salvage pathway. This is Uridine-cytidine kinase B (udkB) from Dictyostelium discoideum (Social amoeba).